A 629-amino-acid polypeptide reads, in one-letter code: Pescadillo homolog (629 aa).

In terms of domain architecture, BRCT spans 321–414; the sequence is RLRTLFKGLK…QLLPTNKYFI (94 aa). Disordered regions lie at residues 439–470, 488–568, and 598–629; these read KALL…ETVD, EYKK…MVKP, and IEAS…KLGK. A phosphoserine mark is found at Ser453 and Ser457. Acidic residues-rich tracts occupy residues 454 to 470 and 498 to 523; these read DEDS…ETVD and VNED…EELD. The span at 524–535 shows a compositional bias: basic and acidic residues; it reads EKSKRLQEEKQK. The segment covering 542–551 has biased composition (basic residues); sequence KVHKVNKRQV. Composition is skewed to basic and acidic residues over residues 552 to 561 and 598 to 617; these read HKAEVDEHRL and IEAS…RKEA. The stretch at 584–627 forms a coiled coil; that stretch reads KEKEEWLLRKKRRTIEASEKEARKTAKREARKEAAAAAAKASKL. The segment covering 618-629 has biased composition (low complexity); that stretch reads AAAAAKASKLGK.

It belongs to the pescadillo family.

Its subcellular location is the nucleus. The protein localises to the nucleolus. It localises to the nucleoplasm. Required for maturation of ribosomal RNAs and formation of the large ribosomal subunit. This chain is Pescadillo homolog, found in Drosophila erecta (Fruit fly).